A 915-amino-acid polypeptide reads, in one-letter code: Nitrate reductase [NADH] (915 aa).

Residues 1 to 102 (MAASVEPRQP…PRDEGTADAW (102 aa)) form a disordered region. Low complexity predominate over residues 16-26 (APATAPTARAP). A compositionally biased stretch (acidic residues) spans 57–71 (AEEEEDDDDEDDEGH). Residues 88–97 (PSTRDPRDEG) show a composition bias toward basic and acidic residues. Residue cysteine 189 coordinates Mo-molybdopterin. The Cytochrome b5 heme-binding domain occupies 538 to 613 (DKQFTMSEVR…LDTYRIGELI (76 aa)). The heme site is built by histidine 573 and histidine 596. The FAD-binding FR-type domain occupies 654-767 (REKVPCRLVD…KGPLGHVEYT (114 aa)). Residues 706–709 (RAYT), 723–727 (LVKVY), phenylalanine 728, phenylalanine 735, 740–742 (LMT), serine 791, and threonine 794 each bind FAD.

The protein belongs to the nitrate reductase family. Homodimer. The cofactor is FAD. Heme serves as cofactor. Mo-molybdopterin is required as a cofactor.

The catalysed reaction is nitrite + NAD(+) + H2O = nitrate + NADH + H(+). Nitrate reductase is a key enzyme involved in the first step of nitrate assimilation in plants, fungi and bacteria. The polypeptide is Nitrate reductase [NADH] (Hordeum vulgare (Barley)).